A 687-amino-acid chain; its full sequence is Acetyl-coenzyme A synthetase 2 (687 aa).

Residues 206-209 (RGGK) and Thr-325 contribute to the CoA site. Residues 401–403 (GEP), 425–430 (DTMWQT), Asp-516, and Arg-531 each bind ATP. Ser-539 contacts CoA. Arg-542 contacts ATP. Arg-617 serves as a coordination point for CoA.

Belongs to the ATP-dependent AMP-binding enzyme family.

The enzyme catalyses acetate + ATP + CoA = acetyl-CoA + AMP + diphosphate. The chain is Acetyl-coenzyme A synthetase 2 (ACS2) from Eremothecium gossypii (strain ATCC 10895 / CBS 109.51 / FGSC 9923 / NRRL Y-1056) (Yeast).